The chain runs to 447 residues: Ameloblastin (447 aa).

The N-terminal stretch at Met-1 to Ala-26 is a signal peptide. Pro-37 carries the post-translational modification Hydroxyproline. A Phosphoserine modification is found at Ser-43. O-linked (GalNAc...) serine glycosylation occurs at Ser-112. 3 disordered regions span residues Gln-165 to Asp-211, Asp-307 to Asn-338, and Leu-353 to Ala-383. A run of 2 repeats spans residues Pro-189–Gly-201 and Pro-202–Gly-214.

This sequence belongs to the ameloblastin family. As to expression, ameloblast-specific. Located at the Tomes processes of secretory ameloblasts and in the sheath space between rod-interrod enamel.

Its subcellular location is the secreted. The protein resides in the extracellular space. It localises to the extracellular matrix. Functionally, involved in the mineralization and structural organization of enamel. This Homo sapiens (Human) protein is Ameloblastin (AMBN).